A 665-amino-acid polypeptide reads, in one-letter code: tRNA 5-methylaminomethyl-2-thiouridine biosynthesis bifunctional protein MnmC (665 aa).

Residues 1 to 235 form a tRNA (mnm(5)s(2)U34)-methyltransferase region; it reads MTITRHAQID…KWEVLRGTFI (235 aa). The segment at 266-665 is FAD-dependent cmnm(5)s(2)U34 oxidoreductase; the sequence is IGAGLAGCAT…RGKGKQTVGH (400 aa).

The protein in the N-terminal section; belongs to the methyltransferase superfamily. tRNA (mnm(5)s(2)U34)-methyltransferase family. In the C-terminal section; belongs to the DAO family. FAD serves as cofactor.

It localises to the cytoplasm. The enzyme catalyses 5-aminomethyl-2-thiouridine(34) in tRNA + S-adenosyl-L-methionine = 5-methylaminomethyl-2-thiouridine(34) in tRNA + S-adenosyl-L-homocysteine + H(+). In terms of biological role, catalyzes the last two steps in the biosynthesis of 5-methylaminomethyl-2-thiouridine (mnm(5)s(2)U) at the wobble position (U34) in tRNA. Catalyzes the FAD-dependent demodification of cmnm(5)s(2)U34 to nm(5)s(2)U34, followed by the transfer of a methyl group from S-adenosyl-L-methionine to nm(5)s(2)U34, to form mnm(5)s(2)U34. The chain is tRNA 5-methylaminomethyl-2-thiouridine biosynthesis bifunctional protein MnmC from Pseudomonas syringae pv. syringae (strain B728a).